Reading from the N-terminus, the 39-residue chain is Non-specific lipid-transfer protein (39 aa).

Belongs to the plant LTP family.

Its function is as follows. Plant non-specific lipid-transfer proteins transfer phospholipids as well as galactolipids across membranes. May play a role in wax or cutin deposition in the cell walls of expanding epidermal cells and certain secretory tissues. This chain is Non-specific lipid-transfer protein, found in Musa acuminata (Banana).